The primary structure comprises 628 residues: RING finger protein 112 (628 aa).

An RING-type zinc finger spans residues 57 to 98 (CSICLERPREPISLDCGHDFCPRCFSTHRVPGCGPPCCPECR). An interaction with ZBTB16 region spans residues 132 to 628 (AVRAEPLLLV…GDREPLLQEE (497 aa)). The GB1/RHD3-type G domain maps to 167 to 409 (DTPVCLLAVL…RCPGYWSEGR (243 aa)). 318 to 319 (RD) is a binding site for GTP. 2 helical membrane passes run 544-564 (LAAV…GVVG) and 577-597 (GMVA…GGGV).

The protein belongs to the TRAFAC class dynamin-like GTPase superfamily. GB1/RHD3 GTPase family. GB1 subfamily. Self-associates. Interacts with SP1 in an oxidative stress-regulated manner. Interacts with SIGMAR1 in an oxidative stress-regulated manner. Interacts with ZBTB16 (via C2H2-type zinc finger domains 1 and 2). Auto-ubiquitinated.

The protein resides in the membrane. It is found in the cytoplasm. Its subcellular location is the nucleus. The protein localises to the nuclear body. It localises to the nucleoplasm. The protein resides in the endosome. It is found in the cytoplasmic vesicle. Its subcellular location is the secretory vesicle. The protein localises to the synaptic vesicle. It localises to the postsynaptic density. The protein resides in the perikaryon. It is found in the cell projection. Its subcellular location is the neuron projection. The catalysed reaction is S-ubiquitinyl-[E2 ubiquitin-conjugating enzyme]-L-cysteine + [acceptor protein]-L-lysine = [E2 ubiquitin-conjugating enzyme]-L-cysteine + N(6)-ubiquitinyl-[acceptor protein]-L-lysine.. It functions in the pathway protein modification; protein ubiquitination. Functionally, E3 ubiquitin-protein ligase that plays an important role in neuronal differentiation, including neurogenesis and gliogenesis, during brain development. During embryonic development initiates neuronal differentiation by inducing cell cycle arrest at the G0/G1 phase through up-regulation of cell-cycle regulatory proteins. Plays a role not only in the fetal period during the development of the nervous system, but also in the adult brain, where it is involved in the maintenance of neural functions and protection of the nervous tissue cells from oxidative stress-induced damage. Exhibits GTPase and E3 ubiquitin-protein ligase activities. Regulates dendritic spine density and synaptic neurotransmission; its ability to hydrolyze GTP is involved in the maintenance of dendritic spine density. The sequence is that of RING finger protein 112 (RNF112) from Bos taurus (Bovine).